The sequence spans 237 residues: DNA repair protein RecO (237 aa).

The protein belongs to the RecO family.

In terms of biological role, involved in DNA repair and RecF pathway recombination. This Rickettsia akari (strain Hartford) protein is DNA repair protein RecO.